The following is a 481-amino-acid chain: NADH-quinone oxidoreductase subunit N (481 aa).

14 consecutive transmembrane segments (helical) span residues 11-31 (ALPEVALLSLLVLLLPADLWA), 38-58 (WTHYGALATVAVTAAVQLAVW), 74-94 (GMSRLAKMVLYALTFVLFVYA), 103-123 (IFKGEFYTLSLFALLGMSVMV), 128-148 (FLTAYIGLELLSLALYALIAL), 163-183 (FVLGALASGLLLYGISMVYGA), 208-228 (LGLVFIVVAVAFKLGAVPFHM), 241-261 (VTALVGTAPKIAAVVFAFRIL), 272-292 (WSLMFALLAAASLLVGNLAAI), 300-322 (MLAYSTVSHMGFILLAFMAGAVG), 332-352 (TYALMAAAGFGVLMVLSDGDN), 368-388 (VWLAFLMLLVMFSMAGIPPLM), 404-424 (GYVWLSVFAVVMSLVGAFYYL), and 450-470 (SLLSVNALLLVLWGIMPQTVI).

The protein belongs to the complex I subunit 2 family. NDH-1 is composed of 14 different subunits. Subunits NuoA, H, J, K, L, M, N constitute the membrane sector of the complex.

The protein localises to the cell inner membrane. The enzyme catalyses a quinone + NADH + 5 H(+)(in) = a quinol + NAD(+) + 4 H(+)(out). Its function is as follows. NDH-1 shuttles electrons from NADH, via FMN and iron-sulfur (Fe-S) centers, to quinones in the respiratory chain. The immediate electron acceptor for the enzyme in this species is believed to be ubiquinone. Couples the redox reaction to proton translocation (for every two electrons transferred, four hydrogen ions are translocated across the cytoplasmic membrane), and thus conserves the redox energy in a proton gradient. In Neisseria gonorrhoeae (strain ATCC 700825 / FA 1090), this protein is NADH-quinone oxidoreductase subunit N.